A 139-amino-acid chain; its full sequence is Spermatogenesis-associated protein 33 (139 aa).

The interval 1–67 (MVTHAAGART…TAKHPPPAAS (67 aa)) is interaction with ATG16L1. The disordered stretch occupies residues 1–83 (MVTHAAGART…VKQKSSRKKV (83 aa)). Over residues 25-50 (KSKEKLMEKHSQEARQADRESEKPVD) the composition is skewed to basic and acidic residues. Positions 68–139 (LEEKPDVKQK…ADAYNSHLKE (72 aa)) are interaction with VDAC2. The PQIIIT motif lies at 86-91 (PQIIIT). S94 is subject to Phosphoserine. The segment covering 97 to 109 (TLVSCSSSGSDQQ) has biased composition (polar residues). The disordered stretch occupies residues 97–139 (TLVSCSSSGSDQQRTIREPEDWGPYRRHRNPSTADAYNSHLKE). Residues 110 to 120 (RTIREPEDWGP) are compositionally biased toward basic and acidic residues.

Interacts (via PQIIIT motif) with PPP3R1, PPP3R2, PPP3CA, PPP3CB and PPP3CC. Interacts with VDAC2. Interacts with ATG16L1 (via WD repeats).

It localises to the cytoplasm. The protein localises to the cytosol. It is found in the nucleus. Its subcellular location is the mitochondrion. Plays an important role in sperm motility and male fertility. Required for sperm midpiece flexibility and for the localization of sperm calcineurin to the mitochondria. Promotes mitophagy as well as acts as an autophagy mediator in male germline cells. Links damaged mitochondria to autophagosomes via its binding to the outer mitochondrial membrane protein VDAC2, as well as to key autophagy machinery component ATG16L1. This Homo sapiens (Human) protein is Spermatogenesis-associated protein 33 (SPATA33).